Reading from the N-terminus, the 432-residue chain is MAAAAGRSAWLAAWGGRLRRGLAAGRRAVPTRGPLAAAVAGVALAGAGAAWHHGRVKAAAREGSRTVSAQKNYLGPIEKLSLRKQRFMQFSSLEHDGEYYMTPRDFLFSVMFEQVERKTLVKKLAKKDIEDVLSGIQTARCGSTFFRDLGDKGVISYTEYLFLLTILTKPHSGFHVAFKMLDVDGNEMIERKEFVKLQKIISKQDGFKTVKTNETEYQDPTVKEPGVNTTLQVRFFGKRGEKKLHYKEFRRFMENLQTEVQEMEFLQFSKGLNFMRKEDFAEWLLFFTNTENKDIYWRNVREKLSVGESISLDEFKSFCHFTTHLEDFAIAMQMFSLAHRPVRLAEFKRAVKVATGQELSDNLLDTVFKIFDLDGDECLSHGEFLGVLKNRMHRGLWVSQQQSVQEYWKCVKKESIKGVKEAWRQQAGKGPF.

The N-terminal 22 residues, 1 to 22 (MAAAAGRSAWLAAWGGRLRRGL), are a transit peptide targeting the mitochondrion. Residues 169 to 204 (KPHSGFHVAFKMLDVDGNEMIERKEFVKLQKIISKQ) enclose the EF-hand 1 domain. Aspartate 182, aspartate 184, asparagine 186, methionine 188, glutamate 190, and glutamate 193 together coordinate Ca(2+). Serine 202 is modified (phosphoserine). The EF-hand 2; degenerate domain occupies 224–259 (EPGVNTTLQVRFFGKRGEKKLHYKEFRRFMENLQTE). Positions 290–325 (TENKDIYWRNVREKLSVGESISLDEFKSFCHFTTHL) constitute an EF-hand 3; degenerate domain. Positions 359–394 (LSDNLLDTVFKIFDLDGDECLSHGEFLGVLKNRMHR) constitute an EF-hand 4 domain. Residues aspartate 372, aspartate 374, aspartate 376, cysteine 378, and glutamate 383 each contribute to the Ca(2+) site.

It belongs to the MICU1 family. MICU2 subfamily. As to quaternary structure, heterodimer; disulfide-linked; heterodimerizes with MICU1. Component of the uniplex complex, composed of MCU, EMRE/SMDT1, MICU1 and MICU2 in a 4:4:1:1 stoichiometry. As to expression, predominantly expressed in stomach, intestine, skeletal muscle, kidney, heart, testis, prostate and uterus.

The protein localises to the mitochondrion intermembrane space. It is found in the mitochondrion inner membrane. In terms of biological role, calcium sensor of the mitochondrial calcium uniporter (MCU) channel, which senses calcium level via its EF-hand domains. MICU1 and MICU2 form a disulfide-linked heterodimer that stimulates and inhibits MCU activity, depending on the concentration of calcium. At low calcium levels, MICU1 occludes the pore of the MCU channel, preventing mitochondrial calcium uptake. At higher calcium levels, calcium-binding to MICU1 and MICU2 induces a conformational change that weakens MCU-MICU1 interactions and moves the MICU1-MICU2 heterodimer away from the pore, allowing calcium permeation through the MCU channel. In Mus musculus (Mouse), this protein is Calcium uptake protein 2, mitochondrial.